We begin with the raw amino-acid sequence, 265 residues long: HUWE1-associated protein modifying stress responses (265 aa).

4 disordered regions span residues 1–22 (MEDK…HWFS), 145–170 (RNSR…GSSV), 195–218 (VRSS…RRNG), and 240–265 (GTRK…NRMI). Polar residues-rich tracts occupy residues 156-170 (VSPN…GSSV) and 195-212 (VRSS…SSNT).

The protein belongs to the HAPSTR1 family. Oligomer.

The protein localises to the nucleus. It is found in the cytoplasm. Acts as a central player within a network of stress response pathways promoting cellular adaptability. Functions as a negative regulator of TP53/P53 in the cellular response to telomere erosion and probably also DNA damage. The sequence is that of HUWE1-associated protein modifying stress responses from Xenopus tropicalis (Western clawed frog).